The chain runs to 273 residues: Large ribosomal subunit protein uL2 (273 aa).

The disordered stretch occupies residues 221–273 (RGTAMNPVDHPHGGGEGRNFGKHPVTPWGVQTKGKKTRHNKRTDKFIVRRRGK). Basic residues predominate over residues 253–273 (KGKKTRHNKRTDKFIVRRRGK).

It belongs to the universal ribosomal protein uL2 family. In terms of assembly, part of the 50S ribosomal subunit. Forms a bridge to the 30S subunit in the 70S ribosome.

One of the primary rRNA binding proteins. Required for association of the 30S and 50S subunits to form the 70S ribosome, for tRNA binding and peptide bond formation. It has been suggested to have peptidyltransferase activity; this is somewhat controversial. Makes several contacts with the 16S rRNA in the 70S ribosome. This is Large ribosomal subunit protein uL2 from Glaesserella parasuis serovar 5 (strain SH0165) (Haemophilus parasuis).